A 446-amino-acid chain; its full sequence is MQRFTRPLFGQVLIALALGIALGIWAPDFAQHLKPLGDGFLKLIKMLIAPIVFSVVVVGICGAGELKKVGRVGGKAVIYFEVVTTIALALGIALAYAFGPGHGMNVDPKTLDASAMSSYMATAKQVESSGVAEFLLKLIPDTFVSGFMKGDILQVLLVSILFGCALSLLGERTKPLVGLIDQLSHVLFRMMAVVIRLAPLGVLGAVAFTVGKYGAGSLKQLGFLVLLFYAAVAVFVVVVLGGILRLAGFSIFKLIRFLRAELLVVLGTASSDAVLPSVMNKLEKMGIKRSVVGLVIPTGYSFNLDAFSIYLTLAAVFIAQATNTPLALSDLLLILGVALITSKGAHGIPGSAIVILAATLSVIPAIPAIGLVLVLSVDWFIGIARALGNLLGNCVATVVIAAWEKDIDRARANAVLDGKLDIIEEGEAAARGHGIQVPSASTLPHA.

10 helical membrane passes run 7–26, 46–64, 77–99, 152–171, 192–211, 221–243, 291–313, 318–340, 353–375, and 381–403; these read PLFG…GIWA, MLIA…CGAG, VIYF…YAFG, ILQV…LLGE, AVVI…FTVG, LGFL…LGGI, VVGL…YLTL, IAQA…VALI, IVIL…VLVL, and IGIA…IAAW.

It belongs to the dicarboxylate/amino acid:cation symporter (DAACS) (TC 2.A.23) family.

It is found in the cell inner membrane. Its function is as follows. Responsible for the transport of dicarboxylates such as succinate, fumarate, and malate from the periplasm across the membrane. This Ralstonia nicotianae (strain ATCC BAA-1114 / GMI1000) (Ralstonia solanacearum) protein is C4-dicarboxylate transport protein 2 (dctA2).